A 275-amino-acid chain; its full sequence is DNA-directed RNA polymerase subunit Rpo3 (275 aa).

This sequence belongs to the archaeal Rpo3/eukaryotic RPB3 RNA polymerase subunit family. In terms of assembly, part of the RNA polymerase complex.

The protein localises to the cytoplasm. The enzyme catalyses RNA(n) + a ribonucleoside 5'-triphosphate = RNA(n+1) + diphosphate. DNA-dependent RNA polymerase (RNAP) catalyzes the transcription of DNA into RNA using the four ribonucleoside triphosphates as substrates. The protein is DNA-directed RNA polymerase subunit Rpo3 of Methanopyrus kandleri (strain AV19 / DSM 6324 / JCM 9639 / NBRC 100938).